The primary structure comprises 207 residues: Putative 3-methyladenine DNA glycosylase (207 aa).

Low complexity predominate over residues 182-193; it reads PAPAGARAARAP. A disordered region spans residues 182-207; the sequence is PAPAGARAARAPAPAPRPRRPRGSGP. Positions 198–207 are enriched in basic residues; it reads RPRRPRGSGP.

The protein belongs to the DNA glycosylase MPG family.

In Anaeromyxobacter dehalogenans (strain 2CP-C), this protein is Putative 3-methyladenine DNA glycosylase.